The chain runs to 369 residues: Chorismate synthase (369 aa).

Residues Arg-48 and Arg-54 each contribute to the NADP(+) site. Residues 125-127, 238-239, Gly-278, 293-297, and Arg-319 each bind FMN; these read RSS, NA, and KPTSS.

Belongs to the chorismate synthase family. In terms of assembly, homotetramer. FMNH2 serves as cofactor.

The catalysed reaction is 5-O-(1-carboxyvinyl)-3-phosphoshikimate = chorismate + phosphate. The protein operates within metabolic intermediate biosynthesis; chorismate biosynthesis; chorismate from D-erythrose 4-phosphate and phosphoenolpyruvate: step 7/7. Its function is as follows. Catalyzes the anti-1,4-elimination of the C-3 phosphate and the C-6 proR hydrogen from 5-enolpyruvylshikimate-3-phosphate (EPSP) to yield chorismate, which is the branch point compound that serves as the starting substrate for the three terminal pathways of aromatic amino acid biosynthesis. This reaction introduces a second double bond into the aromatic ring system. The protein is Chorismate synthase of Cupriavidus metallidurans (strain ATCC 43123 / DSM 2839 / NBRC 102507 / CH34) (Ralstonia metallidurans).